Consider the following 726-residue polypeptide: Mitotic spindle checkpoint protein MAD1 (726 aa).

Positions 1–30 (MILRTPQPKRLRSDAGESPFPTGATGSGNQ) are disordered. Coiled-coil stretches lie at residues 68–246 (ADVL…LKLI) and 272–625 (SDNS…VFAD).

Belongs to the MAD1 family. As to quaternary structure, homodimer. Part of the mitotic checkpoint complex (MCC). Interacts with MAD2 and NUA.

It is found in the nucleus envelope. Its function is as follows. Required for the execution of the mitotic checkpoint which monitors the process of kinetochore-spindle attachment and delays the onset of anaphase when this process is not complete. It inhibits the activity of the anaphase promoting complex by sequestering CDC20 until all chromosomes are aligned at the metaphase plate. Required for anchoring MAD2 to the nuclear envelope. This is Mitotic spindle checkpoint protein MAD1 from Arabidopsis thaliana (Mouse-ear cress).